We begin with the raw amino-acid sequence, 902 residues long: MAQESDLSKTADKGKGKAVDDEKKHQDVDGKTPANGKKEEEQNASEELSEEDQQLKSELEMLVERLTESDATLYKPALEAMKNSIKTSTSSMTAVPKPLKFLRPHYETMTKLYDEWPAGDDKSSLADVLSVIGMTYSDEDRQDTLKYRLLSPTQDIGSWGHEYVRHLALEIGEVYAKRIANDEPTQELVDLALVLVPLFLKSNAEADAVDLMSELEIIEELPKFLDENTYSRVCLYMVSMVNLLTYPDNETFLRVAHSIYKKYNQHTQAMVLAIRLNDLGLIEKDFEAADEDPALRKQLAFLIARQGIPLEFERSNDDDEKIYECLSNQKLSEYFKSLGKELNILEPKTTEDIYKSHLESSRVAGMTNFDSARHNLAAGFVNAFVNAGFGSDKMMLVGKDKDSWVWKTKDEGMMSTVASLGTLLLWDVENGLDHVDKYTYLEEEQIQAGAYLAIGIMNTNVRTDSEPAMALLADPDKLAHKNPLIRVATIMGLGLAYAGSCKEELLSFLVNIISDPEESMQVSAMAALACGMIFVGSSNSEVSEAIVTTLLDEESGSRLNDKWSRFLALGLGLLYFGRQEQVDVILETLKAVEHPMAKPTAVLAEICAWAGTGAVLKIQELLHICNEHIEDGEEKKGEELLQAYAVLGIGLIAMGEDVGQEMVLRHFGHLMHYGEANIRRAVPLAMGLISPSNPQMKVYDTLSRYSHDNDNEVAINAIFAMGLLGAGTNNARLAQLLRQLASYYHRDQESLFMVRIAQGLLHMGKGTLSVSPFHTDRQVLSNVATAGLLAVLVAMIDAKQFITSKSHYLLYWIVTAMHPRMLVTLDEDLKPLTVNVRVGQAVDVVGQAGRPKTITGWQTQSTPVLLGYGERAELEDDQYISLSSTLEGLVILRKNPDWEGEK.

Basic and acidic residues predominate over residues 1–41 (MAQESDLSKTADKGKGKAVDDEKKHQDVDGKTPANGKKEEE). Residues 1-54 (MAQESDLSKTADKGKGKAVDDEKKHQDVDGKTPANGKKEEEQNASEELSEEDQQ) are disordered. Residues 42–52 (QNASEELSEED) are compositionally biased toward acidic residues. PC repeat units follow at residues 415 to 448 (STVASLGTLLLWDVENGLDHVDKYTYLEEEQIQA), 449 to 487 (GAYLAIGIMNTNVRTDSEPAMALLADPDKLAHKNPLIRV), 488 to 522 (ATIMGLGLAYAGSCKEELLSFLVNIISDPEESMQV), 525 to 559 (MAALACGMIFVGSSNSEVSEAIVTTLLDEESGSRL), 568 to 601 (ALGLGLLYFGRQEQVDVILETLKAVEHPMAKPTA), 645 to 680 (AVLGIGLIAMGEDVGQEMVLRHFGHLMHYGEANIRR), 681 to 715 (AVPLAMGLISPSNPQMKVYDTLSRYSHDNDNEVAI), and 716 to 750 (NAIFAMGLLGAGTNNARLAQLLRQLASYYHRDQES).

It belongs to the proteasome subunit S2 family.

Its function is as follows. Acts as a regulatory subunit of the 26 proteasome which is involved in the ATP-dependent degradation of ubiquitinated proteins. The polypeptide is 26S proteasome regulatory subunit rpn-1 (rpn-1) (Neurospora crassa (strain ATCC 24698 / 74-OR23-1A / CBS 708.71 / DSM 1257 / FGSC 987)).